Reading from the N-terminus, the 154-residue chain is General odorant-binding protein 83a (154 aa).

An N-terminal signal peptide occupies residues 1–33; the sequence is MALNGFGRRVSASVLLIALSLLSGALILPPAAA. Disulfide bonds link Cys55/Cys86, Cys82/Cys133, and Cys124/Cys142.

The protein belongs to the PBP/GOBP family. In the ventrolateral region of the antenna, expressed in two distinct types of olfactory hairs: in most sensilla trichodea and in a subset of the small sensilla basiconica (at protein level).

Its subcellular location is the secreted. This is General odorant-binding protein 83a (Obp83a) from Drosophila melanogaster (Fruit fly).